The following is a 254-amino-acid chain: MFIAGKNIIFVAGLGGIGLETSREIVKSGPKNLVILDRAPNPAAIAELQALNPKVTVSFYLYDVTVPQSETVKLLKTIFAKLKTIDLLINGAGILDDHQIERTIAVNFTGTVNTTTAIMEFWDKRKGGPGGVVANICSVTGFNSIYQVPVYSASKAAALSFTSSIAKLATITGVTVYSINPGITDTTLVHKFNSWLDVEPHVAEKLLAFPTQTSLACAKNFVKAIEANKNGAIWKLDLGRLDEIEWTKHWDSGI.

10–33 (FVAGLGGIGLETSREIVKSGPKNL) is an NAD(+) binding site. Substrate is bound at residue Ser138. Tyr151 acts as the Proton acceptor in catalysis.

This sequence belongs to the short-chain dehydrogenases/reductases (SDR) family. As to quaternary structure, homodimer.

It catalyses the reaction a primary alcohol + NAD(+) = an aldehyde + NADH + H(+). It carries out the reaction a secondary alcohol + NAD(+) = a ketone + NADH + H(+). This chain is Alcohol dehydrogenase (Adh), found in Scaptomyza crassifemur (Fruit fly).